The primary structure comprises 302 residues: tRNA-cytidine(32) 2-sulfurtransferase (302 aa).

The short motif at 44 to 49 is the PP-loop motif element; that stretch reads SGGKDS. Residues Cys-119, Cys-122, and Cys-210 each contribute to the [4Fe-4S] cluster site.

This sequence belongs to the TtcA family. Homodimer. Mg(2+) is required as a cofactor. The cofactor is [4Fe-4S] cluster.

It is found in the cytoplasm. It carries out the reaction cytidine(32) in tRNA + S-sulfanyl-L-cysteinyl-[cysteine desulfurase] + AH2 + ATP = 2-thiocytidine(32) in tRNA + L-cysteinyl-[cysteine desulfurase] + A + AMP + diphosphate + H(+). The protein operates within tRNA modification. Its function is as follows. Catalyzes the ATP-dependent 2-thiolation of cytidine in position 32 of tRNA, to form 2-thiocytidine (s(2)C32). The sulfur atoms are provided by the cysteine/cysteine desulfurase (IscS) system. The chain is tRNA-cytidine(32) 2-sulfurtransferase from Tolumonas auensis (strain DSM 9187 / NBRC 110442 / TA 4).